A 325-amino-acid polypeptide reads, in one-letter code: tRNA (guanine-N(7)-)-methyltransferase (325 aa).

Positions 1-101 (MSEATDKQKQ…LEYPKSPESM (101 aa)) are disordered. Polar residues predominate over residues 51-69 (VSTTPEPEQSDSSATTATI). S-adenosyl-L-methionine is bound by residues Gly-122, 145–146 (EI), 199–200 (NA), and Cys-219. The active site involves Asp-222. 297 to 299 (TEE) is a binding site for S-adenosyl-L-methionine.

The protein belongs to the class I-like SAM-binding methyltransferase superfamily. TrmB family. As to quaternary structure, forms a complex with TRM82.

The protein resides in the nucleus. The enzyme catalyses guanosine(46) in tRNA + S-adenosyl-L-methionine = N(7)-methylguanosine(46) in tRNA + S-adenosyl-L-homocysteine. It functions in the pathway tRNA modification; N(7)-methylguanine-tRNA biosynthesis. In terms of biological role, catalyzes the formation of N(7)-methylguanine at position 46 (m7G46) in tRNA. The polypeptide is tRNA (guanine-N(7)-)-methyltransferase (Candida albicans (strain SC5314 / ATCC MYA-2876) (Yeast)).